We begin with the raw amino-acid sequence, 933 residues long: Serine/threonine-protein kinase PknD (933 aa).

Residues 4 to 291 (YDIIRMIGKG…ALKADIEQHL (288 aa)) form the Protein kinase domain. Residues 10 to 18 (IGKGGMGEV) and Lys-33 contribute to the ATP site. Asp-138 (proton acceptor) is an active-site residue.

This sequence belongs to the protein kinase superfamily. Ser/Thr protein kinase family. In terms of processing, autophosphorylated on serine and threonine residues.

It carries out the reaction L-seryl-[protein] + ATP = O-phospho-L-seryl-[protein] + ADP + H(+). The catalysed reaction is L-threonyl-[protein] + ATP = O-phospho-L-threonyl-[protein] + ADP + H(+). Together with the serine/threonine kinase Pkn1, may play a role in the specific interactions with host proteins during intracellular growth. This chain is Serine/threonine-protein kinase PknD, found in Chlamydia abortus (strain DSM 27085 / S26/3) (Chlamydophila abortus).